Consider the following 79-residue polypeptide: Dolichyl-diphosphooligosaccharide--protein glycosyltransferase subunit TMEM258 (79 aa).

Helical transmembrane passes span valine 17–phenylalanine 37 and leucine 55–valine 75.

The protein belongs to the OST5 family. As to quaternary structure, component of the oligosaccharyltransferase (OST) complex.

The protein resides in the membrane. The protein localises to the endoplasmic reticulum. It is found in the cytoplasm. Its pathway is protein modification; protein glycosylation. Functionally, subunit of the oligosaccharyl transferase (OST) complex that catalyzes the initial transfer of a defined glycan (Glc(3)Man(9)GlcNAc(2) in eukaryotes) from the lipid carrier dolichol-pyrophosphate to an asparagine residue within an Asn-X-Ser/Thr consensus motif in nascent polypeptide chains, the first step in protein N-glycosylation. N-glycosylation occurs cotranslationally and the complex associates with the Sec61 complex at the channel-forming translocon complex that mediates protein translocation across the endoplasmic reticulum (ER). All subunits are required for a maximal enzyme activity. The sequence is that of Dolichyl-diphosphooligosaccharide--protein glycosyltransferase subunit TMEM258 from Xenopus laevis (African clawed frog).